Here is a 109-residue protein sequence, read N- to C-terminus: Large ribosomal subunit protein P2 (109 aa).

Residues 63-109 (ASVPSGGAGGASGGAAAAGGAAEEAKEEEKEEEKEESDEDMGFGLFD) form a disordered region. The span at 68–79 (GGAGGASGGAAA) shows a compositional bias: gly residues. Residues 91 to 103 (EKEEEKEESDEDM) are compositionally biased toward acidic residues. Position 99 is a phosphoserine (S99).

It belongs to the eukaryotic ribosomal protein P1/P2 family. As to quaternary structure, P1 and P2 exist as dimers at the large ribosomal subunit.

Its function is as follows. Plays an important role in the elongation step of protein synthesis. This chain is Large ribosomal subunit protein P2, found in Fusarium culmorum.